Here is a 179-residue protein sequence, read N- to C-terminus: Large ribosomal subunit protein uL5 (179 aa).

The protein belongs to the universal ribosomal protein uL5 family. In terms of assembly, part of the 50S ribosomal subunit; part of the 5S rRNA/L5/L18/L25 subcomplex. Contacts the 5S rRNA and the P site tRNA. Forms a bridge to the 30S subunit in the 70S ribosome.

Its function is as follows. This is one of the proteins that bind and probably mediate the attachment of the 5S RNA into the large ribosomal subunit, where it forms part of the central protuberance. In the 70S ribosome it contacts protein S13 of the 30S subunit (bridge B1b), connecting the 2 subunits; this bridge is implicated in subunit movement. Contacts the P site tRNA; the 5S rRNA and some of its associated proteins might help stabilize positioning of ribosome-bound tRNAs. This Synechococcus sp. (strain CC9605) protein is Large ribosomal subunit protein uL5.